The chain runs to 575 residues: MELENFMANTLLLKARQGFTKKTGRSKKWRELLKLPPVSMCSDLRHSIEKDFSSLCDQQPIGRLLFRQFCNTKPDLKRCIEFLDAAAEYEVTIEEEQREFGLSIYSRFFKENSEVSLPQIPPDLVKECKCNLKQSSPSQNVFQDCAGVIYKYLSEKPFEEYQESTYYNRFLQWKWLERRPVTKNTFRQYRVLGKGGFGEVCACQVRATGKMYACKKLEKKRIKKRKGEAMALNEKRILEKLHSRFVVSLAYTYETKDALCLVLTIMNGGDLKYHIYNLGNPGFEEQRAVFYAAELCCGLEDLQRERIVYRDLKPENILLDDHGHIRISDLGLALEIPEGEMVRGRVGTVGYMAPEIISHEKYTFSPDWWGLGCLIYEMIAGHSPFRKYKEKVNREEMERRVKTETEEYSERFSENAKSICSMLLTKDPSKRLGCQSDGASAVKQHPIFKDINFSRLEANMLDPPFCPDPEAIYCKDILDIGQFSVVKGVNLDTNDEIFYTQFATGCVTIPWQNEMIESGCFKDLNEYEDKGLSPLEKHKICSCILRPKRNFFHRLFRRAACLNIAHSEEREPTEH.

Residue Met1 is modified to N-acetylmethionine. Positions 1-153 (MELENFMANT…DCAGVIYKYL (153 aa)) are N-terminal. Residues 51-171 (DFSSLCDQQP…QESTYYNRFL (121 aa)) enclose the RGS domain. In terms of domain architecture, Protein kinase spans 186-448 (FRQYRVLGKG…ASAVKQHPIF (263 aa)). ATP contacts are provided by residues 192-200 (LGKGGFGEV) and Lys215. Asp311 serves as the catalytic Proton acceptor. One can recognise an AGC-kinase C-terminal domain in the interval 449 to 514 (KDINFSRLEA…GCVTIPWQNE (66 aa)). Ser484 bears the Phosphoserine mark.

The protein belongs to the protein kinase superfamily. AGC Ser/Thr protein kinase family. GPRK subfamily. As to quaternary structure, interacts with DRD3. Post-translationally, palmitoylated. In terms of tissue distribution, isoform GRK4A is expressed in testis. Isoform GRK4B is heterogeneously distributed in the kidney, with 20-fold enrichment in the outer medulla. Has a widespread but low level of expression in tissues other than testis.

It is found in the cytoplasm. Its subcellular location is the cell cortex. The enzyme catalyses [G-protein-coupled receptor] + ATP = [G-protein-coupled receptor]-phosphate + ADP + H(+). Inhibited by heparin. Its function is as follows. Specifically phosphorylates the activated forms of G protein-coupled receptors. Plays an important role in the regulation of renal sodium handling and blood pressure. The polypeptide is G protein-coupled receptor kinase 4 (Grk4) (Rattus norvegicus (Rat)).